The sequence spans 102 residues: Integration host factor subunit beta (102 aa).

Belongs to the bacterial histone-like protein family. In terms of assembly, heterodimer of an alpha and a beta chain.

Functionally, this protein is one of the two subunits of integration host factor, a specific DNA-binding protein that functions in genetic recombination as well as in transcriptional and translational control. This is Integration host factor subunit beta from Marinomonas sp. (strain MWYL1).